The primary structure comprises 177 residues: Inner membrane protein p22 (177 aa).

Over 1-7 (MFNIKMT) the chain is Intravirion. The helical transmembrane segment at 8 to 28 (ISTLLIALIILVIIILVVFLY) threads the bilayer. Topologically, residues 29-177 (YKKQQPPKKV…IALPRNHKHA (149 aa)) are virion surface.

It belongs to the asfivirus inner membrane protein p22 family.

The protein localises to the virion membrane. The protein resides in the host cell membrane. The polypeptide is Inner membrane protein p22 (Ornithodoros (relapsing fever ticks)).